The chain runs to 500 residues: L-arabinose isomerase (500 aa).

E306, E333, H350, and H450 together coordinate Mn(2+).

It belongs to the arabinose isomerase family. As to quaternary structure, homohexamer. It depends on Mn(2+) as a cofactor.

The enzyme catalyses beta-L-arabinopyranose = L-ribulose. Its pathway is carbohydrate degradation; L-arabinose degradation via L-ribulose; D-xylulose 5-phosphate from L-arabinose (bacterial route): step 1/3. Functionally, catalyzes the conversion of L-arabinose to L-ribulose. The sequence is that of L-arabinose isomerase from Salmonella typhi.